Here is a 215-residue protein sequence, read N- to C-terminus: MAGGGPTFSIELSAYGSDLPTDKASGDIPNEEGSGLSRVGSGIWSGRTVDYSSESSSSIGTPGDSEEEDEESEEDNDEEELGLASLRSLEDSLPSKGLSSHYKGKSKSFGNLGEIGSVKEVPKQENPLNKKRRLQIYNKLARKSFYSWQNPKSMPLLPVHEDNDDEEGDDGDLSDEERGGDVLARRPSFKNRALKSMSCFALSDLQEEEEEEEDE.

Disordered stretches follow at residues 1–132 (MAGG…NKKR) and 150–183 (NPKS…GDVL). Residues 64–81 (DSEEEDEESEEDNDEEEL) show a composition bias toward acidic residues. Residues 129 to 137 (NKKRRLQIY) carry the Nuclear localization signal motif. Residues 162 to 175 (DNDDEEGDDGDLSD) show a composition bias toward acidic residues. Positions 177–204 (ERGGDVLARRPSFKNRALKSMSCFALSD) are kinase-inducible domain (KID). Serine 188 is subject to Phosphoserine; by PKA.

In terms of assembly, interacts with HDA19; Ser-188 is critical for this interaction. As to expression, strongly expressed in stems, flowers, roots and immature siliques, but not detected in leaf blades of seedlings.

It is found in the nucleus. Transcription activator which may regulates gene expression through interaction with the histone deacetylase HDA19. The protein is KID-containing protein 1 of Brassica napus (Rape).